A 69-amino-acid chain; its full sequence is Copper chaperone CopZ (69 aa).

The region spanning 2 to 68 (EQKTLQVEGM…AIEDQGYDVA (67 aa)) is the HMA domain. 2 residues coordinate Cu cation: cysteine 13 and cysteine 16.

In terms of assembly, monomer in the absence of copper. Homodimer in the presence of copper ions. Forms a heterodimer (electrostatic interactions) with CopA during the transfer of Cu(+).

It is found in the cytoplasm. In terms of biological role, chaperone that serves for the intracellular sequestration and transport of Cu(+). Delivers Cu(+) to the copper-transporting ATPase CopA. Functions in E.coli to transfer Cu(+) to CopA missing its first metal-binding domain. The polypeptide is Copper chaperone CopZ (copZ) (Bacillus subtilis (strain 168)).